The following is a 240-amino-acid chain: Large ribosomal subunit protein uL2 (240 aa).

Positions 199 to 240 (DHPFGGGGRQHPGRPKSVSRDAAPGRKVGDIASKRTGRGGNE) are disordered. A compositionally biased stretch (basic and acidic residues) spans 221-231 (APGRKVGDIAS).

It belongs to the universal ribosomal protein uL2 family. As to quaternary structure, part of the 50S ribosomal subunit. Forms a bridge to the 30S subunit in the 70S ribosome.

One of the primary rRNA binding proteins. Required for association of the 30S and 50S subunits to form the 70S ribosome, for tRNA binding and peptide bond formation. It has been suggested to have peptidyltransferase activity; this is somewhat controversial. Makes several contacts with the 16S rRNA in the 70S ribosome. The protein is Large ribosomal subunit protein uL2 of Halobacterium salinarum (strain ATCC 29341 / DSM 671 / R1).